Consider the following 126-residue polypeptide: Anti-adapter protein IraD (126 aa).

Belongs to the GpW/Gp25 family. IraD subfamily. In terms of assembly, interacts with RssB.

It localises to the cytoplasm. Its function is as follows. Inhibits RpoS proteolysis by regulating RssB activity, thereby increasing the stability of the sigma stress factor RpoS during oxidative stress. Its effect on RpoS stability is due to its interaction with RssB, which probably blocks the interaction of RssB with RpoS, and the consequent delivery of the RssB-RpoS complex to the ClpXP protein degradation pathway. This is Anti-adapter protein IraD from Salmonella enteritidis PT4 (strain P125109).